The sequence spans 469 residues: tRNA-2-methylthio-N(6)-dimethylallyladenosine synthase (469 aa).

An MTTase N-terminal domain is found at 22-142 (RKVFIKTYGC…LPEALRRAKE (121 aa)). Residues Cys31, Cys67, Cys105, Cys183, Cys187, and Cys190 each coordinate [4Fe-4S] cluster. Residues 169-401 (RARGVTAFLT…QALLLKQQQE (233 aa)) form the Radical SAM core domain. The TRAM domain occupies 404–466 (ESCIGKEIDL…NNSLFAERAE (63 aa)).

The protein belongs to the methylthiotransferase family. MiaB subfamily. Monomer. It depends on [4Fe-4S] cluster as a cofactor.

The protein resides in the cytoplasm. The enzyme catalyses N(6)-dimethylallyladenosine(37) in tRNA + (sulfur carrier)-SH + AH2 + 2 S-adenosyl-L-methionine = 2-methylsulfanyl-N(6)-dimethylallyladenosine(37) in tRNA + (sulfur carrier)-H + 5'-deoxyadenosine + L-methionine + A + S-adenosyl-L-homocysteine + 2 H(+). Functionally, catalyzes the methylthiolation of N6-(dimethylallyl)adenosine (i(6)A), leading to the formation of 2-methylthio-N6-(dimethylallyl)adenosine (ms(2)i(6)A) at position 37 in tRNAs that read codons beginning with uridine. In Rhizobium leguminosarum bv. trifolii (strain WSM2304), this protein is tRNA-2-methylthio-N(6)-dimethylallyladenosine synthase.